A 287-amino-acid polypeptide reads, in one-letter code: 2-dehydro-3-deoxyphosphooctonate aldolase (287 aa).

The protein belongs to the KdsA family.

The protein localises to the cytoplasm. It carries out the reaction D-arabinose 5-phosphate + phosphoenolpyruvate + H2O = 3-deoxy-alpha-D-manno-2-octulosonate-8-phosphate + phosphate. It participates in carbohydrate biosynthesis; 3-deoxy-D-manno-octulosonate biosynthesis; 3-deoxy-D-manno-octulosonate from D-ribulose 5-phosphate: step 2/3. Its pathway is bacterial outer membrane biogenesis; lipopolysaccharide biosynthesis. This chain is 2-dehydro-3-deoxyphosphooctonate aldolase, found in Nitrobacter winogradskyi (strain ATCC 25391 / DSM 10237 / CIP 104748 / NCIMB 11846 / Nb-255).